Here is a 113-residue protein sequence, read N- to C-terminus: Protein Asterix (113 aa).

The chain crosses the membrane as a helical span at residues isoleucine 81–leucine 97.

Belongs to the Asterix family.

Its subcellular location is the membrane. The polypeptide is Protein Asterix (Caenorhabditis elegans).